Here is a 461-residue protein sequence, read N- to C-terminus: V-type ATP synthase beta chain (461 aa).

The protein belongs to the ATPase alpha/beta chains family.

Produces ATP from ADP in the presence of a proton gradient across the membrane. The V-type beta chain is a regulatory subunit. The chain is V-type ATP synthase beta chain from Clostridium botulinum (strain 657 / Type Ba4).